The following is a 711-amino-acid chain: Quinolinate synthase, chloroplastic (711 aa).

The N-terminal 41 residues, 1 to 41 (MDVSSLAAAAPSLVAPPLHHKPHLAFPPHHPSPARGSIGVR), are a transit peptide targeting the chloroplast. Residues 17–63 (PLHHKPHLAFPPHHPSPARGSIGVRCAHSPSPHPLRPSAATADEEVS) are disordered. Catalysis depends on cysteine 114, which acts as the Cysteine persulfide intermediate. Iminosuccinate-binding residues include histidine 263 and serine 289. Cysteine 343 is a binding site for [4Fe-4S] cluster. Iminosuccinate is bound by residues 372–374 (YIN) and serine 394. Cysteine 467 lines the [4Fe-4S] cluster pocket. Iminosuccinate contacts are provided by residues 493-495 (HFE) and threonine 518. Cysteine 631 contacts [4Fe-4S] cluster.

It belongs to the quinolinate synthase family. Type 1 subfamily. Homodimer. The cofactor is [4Fe-4S] cluster.

The protein localises to the plastid. It is found in the chloroplast. The enzyme catalyses iminosuccinate + dihydroxyacetone phosphate = quinolinate + phosphate + 2 H2O + H(+). The protein operates within cofactor biosynthesis; NAD(+) biosynthesis; quinolinate from iminoaspartate: step 1/1. Functionally, catalyzes the condensation of iminoaspartate with dihydroxyacetone phosphate to form quinolinate. This is Quinolinate synthase, chloroplastic from Oryza sativa subsp. japonica (Rice).